A 161-amino-acid polypeptide reads, in one-letter code: MEKMPITKSGFENLKKELEHLKCVLIPANIKDIEIARAHGDLSENAEYTAAKEKQSFLHGKLQELENNLALSNVIDLKMLSDDRIVFGATVIIEEASTGKQTNYQLVGPFESNISENKISVTSPIGKALIGKSIGDEVKVHTPGGIRNFEVVDIYINPSEL.

A coiled-coil region spans residues 46-71; it reads AEYTAAKEKQSFLHGKLQELENNLAL.

This sequence belongs to the GreA/GreB family.

In terms of biological role, necessary for efficient RNA polymerase transcription elongation past template-encoded arresting sites. The arresting sites in DNA have the property of trapping a certain fraction of elongating RNA polymerases that pass through, resulting in locked ternary complexes. Cleavage of the nascent transcript by cleavage factors such as GreA or GreB allows the resumption of elongation from the new 3'terminus. GreA releases sequences of 2 to 3 nucleotides. The sequence is that of Transcription elongation factor GreA from Syntrophus aciditrophicus (strain SB).